Here is a 300-residue protein sequence, read N- to C-terminus: Putative S-adenosyl-L-methionine-dependent methyltransferase MMAR_1058 (300 aa).

S-adenosyl-L-methionine is bound by residues D127 and D156 to L157.

Belongs to the UPF0677 family.

In terms of biological role, exhibits S-adenosyl-L-methionine-dependent methyltransferase activity. In Mycobacterium marinum (strain ATCC BAA-535 / M), this protein is Putative S-adenosyl-L-methionine-dependent methyltransferase MMAR_1058.